Consider the following 280-residue polypeptide: 4-hydroxy-tetrahydrodipicolinate reductase (280 aa).

NAD(+)-binding positions include 14-19, Asp40, 106-108, and 130-133; these read GAAGRM, ATT, and APSM. His166 acts as the Proton donor/acceptor in catalysis. (S)-2,3,4,5-tetrahydrodipicolinate is bound at residue His167. Residue Lys170 is the Proton donor of the active site. 176–177 is a binding site for (S)-2,3,4,5-tetrahydrodipicolinate; sequence GT.

This sequence belongs to the DapB family.

It is found in the cytoplasm. The enzyme catalyses (S)-2,3,4,5-tetrahydrodipicolinate + NAD(+) + H2O = (2S,4S)-4-hydroxy-2,3,4,5-tetrahydrodipicolinate + NADH + H(+). It catalyses the reaction (S)-2,3,4,5-tetrahydrodipicolinate + NADP(+) + H2O = (2S,4S)-4-hydroxy-2,3,4,5-tetrahydrodipicolinate + NADPH + H(+). Its pathway is amino-acid biosynthesis; L-lysine biosynthesis via DAP pathway; (S)-tetrahydrodipicolinate from L-aspartate: step 4/4. In terms of biological role, catalyzes the conversion of 4-hydroxy-tetrahydrodipicolinate (HTPA) to tetrahydrodipicolinate. The polypeptide is 4-hydroxy-tetrahydrodipicolinate reductase (Rhodopirellula baltica (strain DSM 10527 / NCIMB 13988 / SH1)).